The sequence spans 915 residues: p53-induced death domain-containing protein 1 (915 aa).

A2 carries the post-translational modification N-acetylalanine. LRR repeat units lie at residues 131 to 152 (CLAH…VPEL), 154 to 176 (GLDA…GALP), 177 to 199 (ALTF…GSLS), 200 to 221 (TLQR…IGNL), 223 to 245 (SLSE…AGLR), 246 to 268 (SLRL…VHLP), and 269 to 290 (LITR…LLDA). Position 304 is a phosphoserine (S304). ZU5 domains are found at residues 327-459 (DLDS…VLRP) and 460-601 (VSNT…WYTT). 2 peptidase S68 regions span residues 428–457 (DLET…LVVL) and 571–599 (DITT…WLWY). Residues H449, S451, H591, and S593 contribute to the active site. The segment at 585–721 (ARFQVTHFSW…TTALDREAQD (137 aa)) is UPA domain. The Death domain maps to 793–878 (TQSNLLSVAS…DVAEEVRAIL (86 aa)). Positions 888-915 (SIRRTGLAPEDSTLPGTSASQTPESAQA) are disordered. A compositionally biased stretch (polar residues) spans 901 to 915 (LPGTSASQTPESAQA).

Forms a complex named the PIDDosome with CASP2 and CRADD. Forms a complex with IKBKG and RIPK1. Interacts with FADD and MADD. In terms of processing, undergoes autoproteolytic processing whose extent either directs cells towards survival or apoptotic pathways. Autoproteolytically cleaved into two main fragments PIDD-N and PIDD-C. PIDD-C can be further processed into PIDD-CC, a processing which is enhanced by DNA damage. The cleavage producing PIDD-C is required for translocation of PIDD1 to the nucleus upon DNA damage and activation of NF-kappa-B. PIDD-CC mediates the interaction with CRADD and the cleavage producing PIDD-CC is required for the activation of CASP2. PIDD-N remains associated with PIDD-C and PIDD-CC after cleavage. Ubiquitous.

Its subcellular location is the cytoplasm. The protein resides in the nucleus. Its function is as follows. Component of the DNA damage/stress response pathway that functions downstream of p53/TP53 and can either promote cell survival or apoptosis. Associated with CRADD and the CASP2 caspase, it forms the PIDDosome a complex that activates CASP2 and triggers apoptosis. Associated with IKBKG and RIPK1, it enhances sumoylation and ubiquitination of IKBKG which is important for activation of the transcription factor NF-kappa-B. This Mus musculus (Mouse) protein is p53-induced death domain-containing protein 1.